The primary structure comprises 186 residues: Large ribosomal subunit protein uL5 (186 aa).

The protein belongs to the universal ribosomal protein uL5 family. In terms of assembly, part of the 50S ribosomal subunit; part of the 5S rRNA/L5/L18/L25 subcomplex. Contacts the 5S rRNA and the P site tRNA. Forms a bridge to the 30S subunit in the 70S ribosome.

Its function is as follows. This is one of the proteins that bind and probably mediate the attachment of the 5S RNA into the large ribosomal subunit, where it forms part of the central protuberance. In the 70S ribosome it contacts protein S13 of the 30S subunit (bridge B1b), connecting the 2 subunits; this bridge is implicated in subunit movement. Contacts the P site tRNA; the 5S rRNA and some of its associated proteins might help stabilize positioning of ribosome-bound tRNAs. This Mycoplasmopsis synoviae (strain 53) (Mycoplasma synoviae) protein is Large ribosomal subunit protein uL5.